Here is a 511-residue protein sequence, read N- to C-terminus: Maturase K (511 aa).

It belongs to the intron maturase 2 family. MatK subfamily.

It is found in the plastid. Its subcellular location is the chloroplast. Usually encoded in the trnK tRNA gene intron. Probably assists in splicing its own and other chloroplast group II introns. This is Maturase K from Bowiea volubilis (Climbing onion).